Consider the following 140-residue polypeptide: Nucleoside diphosphate kinase (140 aa).

Residues lysine 11, phenylalanine 59, arginine 87, threonine 93, arginine 104, and asparagine 114 each contribute to the ATP site. Histidine 117 functions as the Pros-phosphohistidine intermediate in the catalytic mechanism.

It belongs to the NDK family. In terms of assembly, homotetramer. It depends on Mg(2+) as a cofactor.

It is found in the cytoplasm. The enzyme catalyses a 2'-deoxyribonucleoside 5'-diphosphate + ATP = a 2'-deoxyribonucleoside 5'-triphosphate + ADP. The catalysed reaction is a ribonucleoside 5'-diphosphate + ATP = a ribonucleoside 5'-triphosphate + ADP. Functionally, major role in the synthesis of nucleoside triphosphates other than ATP. The ATP gamma phosphate is transferred to the NDP beta phosphate via a ping-pong mechanism, using a phosphorylated active-site intermediate. The polypeptide is Nucleoside diphosphate kinase (Methylobacterium radiotolerans (strain ATCC 27329 / DSM 1819 / JCM 2831 / NBRC 15690 / NCIMB 10815 / 0-1)).